The primary structure comprises 416 residues: Glutamyl-tRNA reductase (416 aa).

Residues 50-53 (TCNR), Ser-109, 114-116 (EPQ), and Gln-120 contribute to the substrate site. Residue Cys-51 is the Nucleophile of the active site. Residue 189–194 (GAGEMI) participates in NADP(+) binding.

This sequence belongs to the glutamyl-tRNA reductase family. In terms of assembly, homodimer.

The catalysed reaction is (S)-4-amino-5-oxopentanoate + tRNA(Glu) + NADP(+) = L-glutamyl-tRNA(Glu) + NADPH + H(+). It participates in porphyrin-containing compound metabolism; protoporphyrin-IX biosynthesis; 5-aminolevulinate from L-glutamyl-tRNA(Glu): step 1/2. Its function is as follows. Catalyzes the NADPH-dependent reduction of glutamyl-tRNA(Glu) to glutamate 1-semialdehyde (GSA). This chain is Glutamyl-tRNA reductase, found in Vesicomyosocius okutanii subsp. Calyptogena okutanii (strain HA).